Here is a 925-residue protein sequence, read N- to C-terminus: Bifunctional uridylyltransferase/uridylyl-removing enzyme (925 aa).

The tract at residues 1 to 382 is uridylyltransferase; sequence MVLPTTKDAT…PPGAEVRRVP (382 aa). Residues 383-738 are uridylyl-removing; the sequence is DSDDFIIDNN…VGFDEARGVT (356 aa). The region spanning 498-621 is the HD domain; the sequence is VDEHLIRCIG…VQSVERMKLL (124 aa). 2 consecutive ACT domains span residues 739 to 820 and 849 to 925; these read ELTI…DVMP and MIEV…NTAE.

The protein belongs to the GlnD family. Mg(2+) serves as cofactor.

It catalyses the reaction [protein-PII]-L-tyrosine + UTP = [protein-PII]-uridylyl-L-tyrosine + diphosphate. The catalysed reaction is [protein-PII]-uridylyl-L-tyrosine + H2O = [protein-PII]-L-tyrosine + UMP + H(+). With respect to regulation, uridylyltransferase (UTase) activity is inhibited by glutamine, while glutamine activates uridylyl-removing (UR) activity. Functionally, modifies, by uridylylation and deuridylylation, the PII regulatory proteins (GlnB and homologs), in response to the nitrogen status of the cell that GlnD senses through the glutamine level. Under low glutamine levels, catalyzes the conversion of the PII proteins and UTP to PII-UMP and PPi, while under higher glutamine levels, GlnD hydrolyzes PII-UMP to PII and UMP (deuridylylation). Thus, controls uridylylation state and activity of the PII proteins, and plays an important role in the regulation of nitrogen assimilation and metabolism. The polypeptide is Bifunctional uridylyltransferase/uridylyl-removing enzyme (Nitrobacter winogradskyi (strain ATCC 25391 / DSM 10237 / CIP 104748 / NCIMB 11846 / Nb-255)).